Here is a 617-residue protein sequence, read N- to C-terminus: E3 ubiquitin-protein ligase ORTHRUS 1 (617 aa).

The PHD-type zinc finger occupies 12–62 (DGVCMRCQVNPPSEETLTCGTCVTPWHVPCLLPESLASSTGEWECPDCSGV). Residues 129–169 (CSICIQLPERPITTPCGHNFCLKCFEKWAVGQGKLTCMICR) form an RING-type 1 zinc finger. One can recognise a YDG domain in the interval 258–407 (TRKQGVLVGE…FKVCRYLFVR (150 aa)). The RING-type 2 zinc finger occupies 495-552 (CQICREVLSLPVTTPCAHNFCKACLEAKFAGITQLRERSNGGRKLRAKKNIMTCPCCT). Positions 563 to 593 (QVNREMMEIIENFKKSEEEADASISEEEEEE) form a coiled coil. Residues 575-617 (FKKSEEEADASISEEEEEESEPPTKKIKMDNNSVGGSGTSLSA) form a disordered region. Positions 580–595 (EEADASISEEEEEESE) are enriched in acidic residues. The segment covering 604–617 (DNNSVGGSGTSLSA) has biased composition (polar residues).

As to expression, expressed in inflorescences and leaves.

It localises to the nucleus. The enzyme catalyses S-ubiquitinyl-[E2 ubiquitin-conjugating enzyme]-L-cysteine + [acceptor protein]-L-lysine = [E2 ubiquitin-conjugating enzyme]-L-cysteine + N(6)-ubiquitinyl-[acceptor protein]-L-lysine.. Its pathway is protein modification; protein ubiquitination. Its function is as follows. E3 ubiquitin-protein ligase. Participates in CpG methylation-dependent transcriptional regulation and epigenetic transcriptional silencing. Mediates ubiquitination with the E2 ubiquitin-conjugating enzymes UBC11, UBC8 and UBC8 homologs (e.g. UBC10, UBC11, UBC28 and UBC29) but not with UBC27, UBC30, UBC32, UBC34 and UBC36. Promotes methylation-mediated gene silencing leading, for example, to early flowering. Can bind to CpG, CpNpG, and CpNpN DNA motifs, with a strong preference for methylated forms, and with highest affinity for CpG substrate. The polypeptide is E3 ubiquitin-protein ligase ORTHRUS 1 (ORTH1) (Arabidopsis thaliana (Mouse-ear cress)).